The following is a 1009-amino-acid chain: Ulvan lyase, long isoform (1009 aa).

A signal peptide spans 1-32; sequence MTAQKSKYFNRIMTMNTLLFSLLTVGFSQAYA. Position 137-138 (137-138) interacts with substrate; that stretch reads SH. The active-site Proton donor/acceptor is the His138. 3 residues coordinate Ca(2+): Asp200, Asp210, and Lys212. Residues Tyr291 and Arg308 each coordinate substrate. Positions 311, 314, and 316 each coordinate Ca(2+). Tyr372 serves as a coordination point for substrate.

The protein belongs to the polysaccharide lyase 24 family.

Functionally, ulvan lyase involved in ulvan degradation. Ulvan is the main polysaccharide component of the Ulvales (green seaweed) cell wall. It is composed of disaccharide building blocks comprising 3-sulfated rhamnose (Rha3S) linked to D-glucuronic acid (GlcA), L-iduronic acid (IduA), or D-xylose (Xyl). Ulvan lyase catalyzes preferentially the endolytic cleavage of the glycosidic bond between Rha3S and the uronic acid GlcA, but not IduA, producing oligosaccharides that have unsaturated 4-deoxy-L-threo-hex-4-enopyranosiduronic acid (deltaUA) at the non-reducing end. The most abundant end products in the degradation of the ulvan polysaccharide were deltaUA-Rha3S disaccharides and deltaUA-Rha3S-IduA-Rha3S and deltaUA-Rha3S-Xyl-Rha3S tetrasaccharides. The chain is Ulvan lyase, long isoform (ullA) from Glaciecola sp. (strain KUL10).